Reading from the N-terminus, the 239-residue chain is 2,3,4,5-tetrahydropyridine-2,6-dicarboxylate N-acetyltransferase (239 aa).

This sequence belongs to the transferase hexapeptide repeat family. DapH subfamily.

It catalyses the reaction (S)-2,3,4,5-tetrahydrodipicolinate + acetyl-CoA + H2O = L-2-acetamido-6-oxoheptanedioate + CoA. It participates in amino-acid biosynthesis; L-lysine biosynthesis via DAP pathway; LL-2,6-diaminopimelate from (S)-tetrahydrodipicolinate (acetylase route): step 1/3. In terms of biological role, catalyzes the transfer of an acetyl group from acetyl-CoA to tetrahydrodipicolinate. The protein is 2,3,4,5-tetrahydropyridine-2,6-dicarboxylate N-acetyltransferase of Staphylococcus haemolyticus (strain JCSC1435).